The following is a 154-amino-acid chain: Large ribosomal subunit protein uL23 (154 aa).

Positions 1-39 (MAPAKADPSKKSDPKAQAAKVAKAVKSGSTLKKKSQKIR) are disordered. A compositionally biased stretch (low complexity) spans 15-26 (KAQAAKVAKAVK).

Belongs to the universal ribosomal protein uL23 family.

Functionally, this protein binds to a specific region on the 26S rRNA. This Nicotiana tabacum (Common tobacco) protein is Large ribosomal subunit protein uL23 (RPL23A).